The following is a 211-amino-acid chain: MRVRRRKGAKEHLENNPRYVILKPEEVKGHWQEVFGNDHPIHIEVGSGKGRFITGMAAKNPQINYIGIDIQVSVLSHALDKVLDSQLPNVKLMLADGSSLMHYFADGEIDLLYLNFSDPWPKKRHEKRRLTYKSFLDTYKKILPEKGEIHFKTDNRELFEYSLASFSQYGMILEQVWLDLHASDYENNVMTEYEEKFSQKGQVIYRVEARF.

Residues Glu44, Asp69, Asp96, and Asp118 each contribute to the S-adenosyl-L-methionine site. Residue Asp118 is part of the active site. Lys122 contacts substrate. An interaction with RNA region spans residues 124–129 (RHEKRR). Residues Asp154 and 191–194 (TEYE) contribute to the substrate site.

This sequence belongs to the class I-like SAM-binding methyltransferase superfamily. TrmB family.

It catalyses the reaction guanosine(46) in tRNA + S-adenosyl-L-methionine = N(7)-methylguanosine(46) in tRNA + S-adenosyl-L-homocysteine. It participates in tRNA modification; N(7)-methylguanine-tRNA biosynthesis. In terms of biological role, catalyzes the formation of N(7)-methylguanine at position 46 (m7G46) in tRNA. In Streptococcus mutans serotype c (strain ATCC 700610 / UA159), this protein is tRNA (guanine-N(7)-)-methyltransferase.